Here is a 7760-residue protein sequence, read N- to C-terminus: Malpinin synthetase (7760 aa).

Disordered stretches follow at residues 42 to 115 (ENPE…VNEK) and 161 to 180 (LDLP…GDRV). A compositionally biased stretch (polar residues) spans 65–79 (TPRSASPLSSYTGSP). The condensation 1 stretch occupies residues 87–389 (TELSRTLSGD…LSLDERTFLL (303 aa)). The span at 164–180 (PTDRPRPSHPSFEGDRV) shows a compositional bias: basic and acidic residues. The interval 409–813 (FEQQAERRPH…GRNDHQVKIR (405 aa)) is adenylation 1. One can recognise a Carrier 1 domain in the interval 926 to 1000 (PPQGELETAI…AFAHAIGQHR (75 aa)). Position 961 is an O-(pantetheine 4'-phosphoryl)serine (Ser961). Positions 1046–1477 (QDIYALAPLQ…VLPADERKLL (432 aa)) are dual epimerase/condensation (E/C) domain 1. Positions 1498 to 1893 (FEQYADRVPN…GRTDYQVKIR (396 aa)) are adenylation 2. The region spanning 2003 to 2077 (APEGEVENAI…ALAQSIGEHR (75 aa)) is the Carrier 2 domain. Ser2038 bears the O-(pantetheine 4'-phosphoryl)serine mark. The interval 2099–2558 (PLIDLNQNDI…LPTEERQLLT (460 aa)) is dual epimerase/condensation (E/C) domain 2. The interval 2578–2973 (FEQHVDRAPD…GRADFQVKIR (396 aa)) is adenylation 3. The Carrier 3 domain occupies 3083 to 3157 (APQGAVEAAI…ALAQSIGEHR (75 aa)). Ser3118 carries the O-(pantetheine 4'-phosphoryl)serine modification. Positions 3203 to 3634 (QDIYALAPLQ…HLNVLPAEER (432 aa)) are dual epimerase/condensation (E/C) domain 3. The interval 3658–4057 (FEQQAERTPD…GRNDDQIKIR (400 aa)) is adenylation 4. A Carrier 4 domain is found at 4174–4248 (APQGEVETAL…AFASRVQEQL (75 aa)). Residue Ser4209 is modified to O-(pantetheine 4'-phosphoryl)serine. The interval 4267 to 4705 (LPLSFAQQRL…AAEILSQDER (439 aa)) is condensation 2. The adenylation 5 stretch occupies residues 4729-5133 (FEQRVESTPD…GRNDHQVKIR (405 aa)). A Carrier 5 domain is found at 5250–5324 (APEGEVETAI…VFAASIGHHQ (75 aa)). Ser5285 carries the O-(pantetheine 4'-phosphoryl)serine modification. The interval 5370 to 5804 (QDIYSLSPLQ…VLPAEERTLL (435 aa)) is dual dehydration/condensation (C*) domain. Residues 5825–6224 (FEQQSERTPE…GRNDDQVKIR (400 aa)) are adenylation 6. Positions 6338–6412 (APQGEVETAL…ALAQSIGQHH (75 aa)) constitute a Carrier 6 domain. Ser6373 carries the O-(pantetheine 4'-phosphoryl)serine modification. The tract at residues 6458–6890 (QDIYALSPLQ…QLDTVPAEEH (433 aa)) is dual epimerase/condensation (E/C) domain 4. Residues 6914-7300 (FEHQVERTPA…KFLPDGNVVC (387 aa)) form an adenylation 7 region. The Carrier 7 domain occupies 7428–7503 (EPRGAIENIL…ELAPRLLATG (76 aa)). Ser7463 carries the post-translational modification O-(pantetheine 4'-phosphoryl)serine. The interval 7561-7722 (DNGNMASSLD…KPYVQGSIEV (162 aa)) is thioesterase (TE) domain.

The protein belongs to the NRP synthetase family.

Its function is as follows. Heptamodular nonribosomal peptide synthetase that catalyzes the biosynthesis of malpinins, natural products that show biosurfactant activities. Malpinins are acetylated hexapeptides (Ac-D-Leu/Val-D-Arg-D-Leu/Val-L-Phe/Leu-Dhb-D-Trp) containing a non-canonical amino acid derived from dehydration of L-Trp, (Z)-dehydrobutyrine (Dhb), at position 5, as well as a C-terminal D-amino acid, D-tryptophan, that can be oxidized to kynurenine. Incorporated D-amino acids in positions 1, 3 and 4 are variable resulting in the malpinin A-congeners malpinin B to E. Both modules M1 and M3 have relaxed specificity towards aliphatic amino acids (L-Leu &gt; L-Met &gt; L/D-Val &gt; L-Cys), explaining Val at position 1 and 3 in malpinin A-congeners malpinin B to D. The incorporation of L-Leu, but not N-acetyl-L-Leu by module 1 suggests the N-terminal acetylation occurs at a later stage of biosynthesis. Similar to M1 and M3, M4 has a broad substrate spectrum showing the highest activity with L-Phe followed by other hydrophobic amino acids (L-Phe &gt; L-Met = L-Trp). In contrast, M2, M5 and M6 are highly specific for L-Arg, L-Thr, and L-Trp, respectively. Solely, M7 converted its preferred substrate (L-Phe) with a 15 000-fold reduced turnover rate compared to the most active module M6, indicating that its A domain cannot contribute to the malpinin biosynthesis due to low activity. Since the last T domain in malA is apparently not loaded with an amino acid, either the TE domain must offload the oligopeptide from the preceding T domain or the dual E/C domain of M7 must transfer the final peptide chain to the free acceptor T domain of M7 prior to release. This chain is Malpinin synthetase, found in Mortierella alpina (Oleaginous fungus).